A 412-amino-acid polypeptide reads, in one-letter code: Tyrosine--tRNA ligase (412 aa).

Residue tyrosine 31 coordinates L-tyrosine. A 'HIGH' region motif is present at residues 36 to 45; that stretch reads PTAPSLHIGH. L-tyrosine is bound by residues tyrosine 162 and glutamine 166. Positions 222–226 match the 'KMSKS' region motif; that stretch reads KIGKT. An ATP-binding site is contributed by lysine 225. The 67-residue stretch at 345–411 folds into the S4 RNA-binding domain; sequence KRWLDIVVEL…GKRKKQVIDL (67 aa).

It belongs to the class-I aminoacyl-tRNA synthetase family. TyrS type 1 subfamily. Homodimer.

It localises to the cytoplasm. It carries out the reaction tRNA(Tyr) + L-tyrosine + ATP = L-tyrosyl-tRNA(Tyr) + AMP + diphosphate + H(+). Its function is as follows. Catalyzes the attachment of tyrosine to tRNA(Tyr) in a two-step reaction: tyrosine is first activated by ATP to form Tyr-AMP and then transferred to the acceptor end of tRNA(Tyr). This Chlamydia trachomatis serovar A (strain ATCC VR-571B / DSM 19440 / HAR-13) protein is Tyrosine--tRNA ligase.